Consider the following 185-residue polypeptide: Peptidyl-tRNA hydrolase (185 aa).

Residue Tyr14 coordinates tRNA. His19 acts as the Proton acceptor in catalysis. Phe64, Asn66, and Asn112 together coordinate tRNA.

This sequence belongs to the PTH family. As to quaternary structure, monomer.

It is found in the cytoplasm. The enzyme catalyses an N-acyl-L-alpha-aminoacyl-tRNA + H2O = an N-acyl-L-amino acid + a tRNA + H(+). In terms of biological role, hydrolyzes ribosome-free peptidyl-tRNAs (with 1 or more amino acids incorporated), which drop off the ribosome during protein synthesis, or as a result of ribosome stalling. Its function is as follows. Catalyzes the release of premature peptidyl moieties from peptidyl-tRNA molecules trapped in stalled 50S ribosomal subunits, and thus maintains levels of free tRNAs and 50S ribosomes. In Alkaliphilus metalliredigens (strain QYMF), this protein is Peptidyl-tRNA hydrolase.